We begin with the raw amino-acid sequence, 142 residues long: Large ribosomal subunit protein uL13 (142 aa).

It belongs to the universal ribosomal protein uL13 family. In terms of assembly, part of the 50S ribosomal subunit.

In terms of biological role, this protein is one of the early assembly proteins of the 50S ribosomal subunit, although it is not seen to bind rRNA by itself. It is important during the early stages of 50S assembly. The sequence is that of Large ribosomal subunit protein uL13 from Vibrio cholerae serotype O1 (strain M66-2).